The primary structure comprises 357 residues: Nicotinate-nucleotide--dimethylbenzimidazole phosphoribosyltransferase (357 aa).

The active-site Proton acceptor is the Glu323.

It belongs to the CobT family.

It carries out the reaction 5,6-dimethylbenzimidazole + nicotinate beta-D-ribonucleotide = alpha-ribazole 5'-phosphate + nicotinate + H(+). The protein operates within nucleoside biosynthesis; alpha-ribazole biosynthesis; alpha-ribazole from 5,6-dimethylbenzimidazole: step 1/2. Its function is as follows. Catalyzes the synthesis of alpha-ribazole-5'-phosphate from nicotinate mononucleotide (NAMN) and 5,6-dimethylbenzimidazole (DMB). In Nitratidesulfovibrio vulgaris (strain DP4) (Desulfovibrio vulgaris), this protein is Nicotinate-nucleotide--dimethylbenzimidazole phosphoribosyltransferase.